The sequence spans 429 residues: Ribosomal RNA small subunit methyltransferase B (429 aa).

S-adenosyl-L-methionine contacts are provided by residues 254 to 260 (CSAPGGK), Asp277, Asp303, and Asp322. The active-site Nucleophile is the Cys375. The disordered stretch occupies residues 397–419 (ALSETGTPDQPGQQNLPGGEEGD). Residues 400–412 (ETGTPDQPGQQNL) show a composition bias toward polar residues.

Belongs to the class I-like SAM-binding methyltransferase superfamily. RsmB/NOP family.

The protein resides in the cytoplasm. The enzyme catalyses cytidine(967) in 16S rRNA + S-adenosyl-L-methionine = 5-methylcytidine(967) in 16S rRNA + S-adenosyl-L-homocysteine + H(+). Functionally, specifically methylates the cytosine at position 967 (m5C967) of 16S rRNA. The protein is Ribosomal RNA small subunit methyltransferase B of Salmonella dublin (strain CT_02021853).